The chain runs to 537 residues: Cytochrome P450 monooxygenase claR (537 aa).

The helical transmembrane segment at 23-43 (VVTITEVALGIITLYLLGSYI) threads the bilayer. Residue cysteine 454 participates in heme binding.

It belongs to the cytochrome P450 family. Heme is required as a cofactor.

The protein localises to the membrane. The catalysed reaction is (2E)-geranylhydroquinone + reduced [NADPH--hemoprotein reductase] + O2 = wigandol + oxidized [NADPH--hemoprotein reductase] + 2 H2O + H(+). It participates in secondary metabolite biosynthesis; terpenoid biosynthesis. Cytochrome P450 monooxygenase; part of the gene cluster that mediates the biosynthesis of clavilactone A, a meroterpenoid that features a unique benzo-fused ten-membered carbocyclic ring unit with an alpha,beta-epoxy-gamma-lactone moiety, forming an intriguing 10/5/3 tricyclic nested skeleton. ClaR, ClaS and ClaT are sufficient to produce clavilactone A. ClaR acts as a macrocyclase to catalyze the oxidative cyclization of the isopentenyl to the nonterpenoid moieties to form the benzo-fused macrocycle, leading to wigantol. The biosynthesis begins with the prenyltransferase claS that transfers geranyl pyrophosphate (GPP) to hydroquinone to produces geranylhydroquinone. The cytochrome P450 monooxygenase claR then catalyzes the diradical coupling reaction between the intramolecular hydroquinone and allyl moieties to form the benzo-fused ten-membered carbocyclic ring unit of wigantol. Finally the cytochrome P450 monooxygenase claT exquisitely and stereoselectively assembles the alpha,beta-epoxy-gamma-lactone moiety, producing clavilactone A via arnebinol A. This is Cytochrome P450 monooxygenase claR from Ampulloclitocybe clavipes (Club foot).